The following is a 695-amino-acid chain: Probable serine/threonine-protein kinase DDB_G0279405 (695 aa).

Disordered stretches follow at residues 119–138 (IVAQ…PQPQ) and 149–192 (QIPT…KRHK). Over residues 124-138 (QPQPQPQPQPQPQPQ) the composition is skewed to pro residues. The span at 149–160 (QIPTTPPQQISQ) shows a compositional bias: low complexity. Residues 161 to 173 (FNITGNKSPSSIG) are compositionally biased toward polar residues. The 262-residue stretch at 201–462 (YVFVRKLGKG…IAEIKSHKWT (262 aa)) folds into the Protein kinase domain. Residues 207–215 (LGKGTFGKV) and Lys230 contribute to the ATP site. Asp329 serves as the catalytic Proton acceptor. A disordered region spans residues 491 to 580 (TDHTIKPSDN…NQNQNNNNNS (90 aa)). Over residues 510–528 (LSSSSGGESSGIIGSSNES) the composition is skewed to low complexity. Over residues 529-541 (KSMYNNVNSKQKI) the composition is skewed to polar residues. Residues 542–580 (QNQNQNQNQNQNQNQNQNQNQNHNQNQNQNQNQNNNNNS) are compositionally biased toward low complexity.

The protein belongs to the protein kinase superfamily. Ser/Thr protein kinase family.

It carries out the reaction L-seryl-[protein] + ATP = O-phospho-L-seryl-[protein] + ADP + H(+). The enzyme catalyses L-threonyl-[protein] + ATP = O-phospho-L-threonyl-[protein] + ADP + H(+). The chain is Probable serine/threonine-protein kinase DDB_G0279405 from Dictyostelium discoideum (Social amoeba).